Reading from the N-terminus, the 215-residue chain is Nascent polypeptide-associated complex subunit alpha (215 aa).

The disordered stretch occupies residues Met1–Ser81. Over residues Val9–Glu28 the composition is skewed to polar residues. The span at Ser29–Gly40 shows a compositional bias: acidic residues. Ser43 carries the post-translational modification Phosphoserine; by ILK1. A compositionally biased stretch (low complexity) spans Thr44–Ala57. The required for DNA-binding stretch occupies residues Gln69–Met80. An NAC-A/B domain is found at Ser70–Ala135. The segment at Arg93 to Lys108 is RNA/DNA-binding. Position 132 is a phosphoserine (Ser132). Residue Lys142 is modified to N6-acetyllysine; alternate. Residue Lys142 forms a Glycyl lysine isopeptide (Lys-Gly) (interchain with G-Cter in SUMO2); alternate linkage. Thr159 bears the Phosphothreonine; by GSK3-beta mark. Position 161 is a phosphothreonine (Thr161). 4 positions are modified to phosphoserine: Ser166, Ser186, Ser191, and Ser203. Residues Val176–Leu213 enclose the UBA domain.

This sequence belongs to the NAC-alpha family. Part of the nascent polypeptide-associated complex (NAC), which is a heterodimer of NACA and BTF3 (via NAC-A/B domains). NAC associates with ribosomes through the BTF3/NACB subunit and contacts the ribosomal protein L23, which is positioned near the exiting site. Both subunits can contact nascent polypeptide chains. NACA may also form homodimers, and only this form binds DNA. Interacts with TBP and JUN. Post-translationally, phosphorylation of Ser-43 by ILK during cell adhesion may promote nuclear localization. Phosphorylation of Thr-159 by GSK3B may promote proteasome mediated degradation.

It is found in the cytoplasm. Its subcellular location is the nucleus. Prevents inappropriate targeting of non-secretory polypeptides to the endoplasmic reticulum (ER). Binds to nascent polypeptide chains as they emerge from the ribosome and blocks their interaction with the signal recognition particle (SRP), which normally targets nascent secretory peptides to the ER. Also reduces the inherent affinity of ribosomes for protein translocation sites in the ER membrane (M sites). May act as a specific coactivator for JUN, binding to DNA and stabilizing the interaction of JUN homodimers with target gene promoters. The polypeptide is Nascent polypeptide-associated complex subunit alpha (Chinchilla lanigera (Long-tailed chinchilla)).